Consider the following 303-residue polypeptide: Haloalkane dehalogenase (303 aa).

The 145-residue stretch at 48 to 192 folds into the AB hydrolase-1 domain; that stretch reads PVLLLHGEPS…GTVTKLSQAV (145 aa). The Nucleophile role is filled by Asp-123. The active-site Proton donor is the Asp-250. His-280 acts as the Proton acceptor in catalysis.

Belongs to the haloalkane dehalogenase family. Type 1 subfamily. As to quaternary structure, monomer.

The enzyme catalyses 1-haloalkane + H2O = a halide anion + a primary alcohol + H(+). Catalyzes hydrolytic cleavage of carbon-halogen bonds in halogenated aliphatic compounds, leading to the formation of the corresponding primary alcohols, halide ions and protons. The polypeptide is Haloalkane dehalogenase (Psychrobacter cryohalolentis (strain ATCC BAA-1226 / DSM 17306 / VKM B-2378 / K5)).